The following is a 509-amino-acid chain: Zinc finger CCCH-type with G patch domain-containing protein (509 aa).

The segment at 155–178 (PCNYYLEGECRFDEIRCRYSHGAL) adopts a C3H1-type zinc-finger fold. The segment at 254–277 (EDELTSEDSSSSPHDESSDEIDSD) is disordered. A G-patch domain is found at 310 to 356 (TRGIGSKLMEKMGYIHGTGLGSEGRGIVTPVSAQILPQGRSLDACME). A disordered region spans residues 407 to 430 (LGGGESRHQGDQAAKKAKTNDLQQ). The segment covering 411–420 (ESRHQGDQAA) has biased composition (basic and acidic residues).

It is found in the nucleus. Its function is as follows. Transcription repressor. The protein is Zinc finger CCCH-type with G patch domain-containing protein of Drosophila pseudoobscura pseudoobscura (Fruit fly).